We begin with the raw amino-acid sequence, 180 residues long: uncharacterized protein (180 aa).

A disordered region spans residues serine 138–glutamate 180. The segment covering proline 145–threonine 154 has biased composition (polar residues). Over residues aspartate 159 to asparagine 169 the composition is skewed to basic and acidic residues.

This is an uncharacterized protein from Acidianus filamentous virus 2 (isolate Italy/Pozzuoli) (AFV-2).